The chain runs to 413 residues: MSSIRLPPPVVIPESQSTVDVYIIDTTSYMSMVPASSFVEPLVSGFETLNAGSYAFLIEHTSSKPSKHDTMVFDLGVRKDWEHLPDTFVAAVKEEGWSIDVQTDVASILRDNGQDLKSVGAIIWSHWHFDHVGDPQTFPSSTDLIVGPGFKQGVMPGWPTAKDSHVNETAWQGRKLIEIDFSGEAALDIGRFQAYDFYGDGSFYLLNSPGHAVGHMSALARTTADPPSFMLLGGDIAHHCGEFRPSPYTPLPNMITPNPLSNTLLACPGRLFLSIHPWKDPERPFFDPTVGPGWHDEGVLAKDSIDKLIEADAYDNIFPVVAHDMTLVGTVDLYPNKANNWMSRGWKEDTRWGFCGDFTPLDEEMVARNGQVEVLEGHHEVRDSAQDPKVTSIVHMESTDVDKKAKLHDPSFV.

Zn(2+)-binding residues include histidine 126, histidine 128, aspartate 130, histidine 131, histidine 211, aspartate 235, and histidine 323.

Belongs to the metallo-beta-lactamase superfamily.

Its pathway is xenobiotic degradation. Functionally, gamma-lactamase; part of the Fusarium detoxification of benzoxazolinone cluster involved in the degradation of benzoxazolinones produced by the host plant. Maize, wheat, and rye produce the 2 benzoxazinone phytoanticipins 2,4-dihy-droxy-7-methoxy-1,4-benzoxazin-3-one (DIMBOA) and 2,4-dihydroxy-1,4-benzoxazin-3-one (DIBOA) that, due to their inherent instability once released, spontaneously degrade to the more stable corresponding benzoxazolinones, 6-methoxy-2-benzoxazolinone (MBOA) and 2-benzoxazolinone (BOA), respectively. The first step in the detoxification of benzoxazolinones involves the hydrolysis of the cyclic ester bond of benzoxazolinones by the gamma-lactamase FDB1 to aminophenols. FDB1 is able to convert BOA into 2-aminophenol (2-AP), as well as MBOA into 5-methoxy-2-aminophenol (2-AMP). The N-malonyltransferase FDB2 then metabolizes aminophenols via N-malonylation to non-toxic malonamic acids. FDB2 converts 2-AP into N-(2-hydroxyphenyl) malonamic acid (HPMA) and 2-AMP into N-(2-hydroxy-4-methoxyphenyl) malonamic acid (HMPMA). The cluster also contains 2 transcription factors (FDB3 and FPSE_08121), an aldo-keto reductase (FPSE_08125) that possibly associates with a ketone component of BOA and MBOA degradation, an esterase (FPSE_08126), an acyl-CoA transferase (FPSE_08120), a solute carrier protein (FPSE_08119) and a transmembrane transporter (FPSE_08127) proposed to shuttle metabolites of benzoxazolinone degradation. This chain is Gamma-lactamase FDB1, found in Fusarium pseudograminearum (strain CS3096) (Wheat and barley crown-rot fungus).